A 349-amino-acid polypeptide reads, in one-letter code: Spermidine/putrescine import ATP-binding protein PotA (349 aa).

An ABC transporter domain is found at 7 to 237 (IELKGITKSY…PANSFVAKFI (231 aa)). 39–46 (GPSGCGKT) contacts ATP.

The protein belongs to the ABC transporter superfamily. Spermidine/putrescine importer (TC 3.A.1.11.1) family. In terms of assembly, the complex is composed of two ATP-binding proteins (PotA), two transmembrane proteins (PotB and PotC) and a solute-binding protein (PotD).

It localises to the cell membrane. It catalyses the reaction ATP + H2O + polyamine-[polyamine-binding protein]Side 1 = ADP + phosphate + polyamineSide 2 + [polyamine-binding protein]Side 1.. In terms of biological role, part of the ABC transporter complex PotABCD involved in spermidine/putrescine import. Responsible for energy coupling to the transport system. In Clostridium perfringens (strain SM101 / Type A), this protein is Spermidine/putrescine import ATP-binding protein PotA.